Here is a 476-residue protein sequence, read N- to C-terminus: Aspartyl/glutamyl-tRNA(Asn/Gln) amidotransferase subunit B (476 aa).

This sequence belongs to the GatB/GatE family. GatB subfamily. Heterotrimer of A, B and C subunits.

The catalysed reaction is L-glutamyl-tRNA(Gln) + L-glutamine + ATP + H2O = L-glutaminyl-tRNA(Gln) + L-glutamate + ADP + phosphate + H(+). The enzyme catalyses L-aspartyl-tRNA(Asn) + L-glutamine + ATP + H2O = L-asparaginyl-tRNA(Asn) + L-glutamate + ADP + phosphate + 2 H(+). Its function is as follows. Allows the formation of correctly charged Asn-tRNA(Asn) or Gln-tRNA(Gln) through the transamidation of misacylated Asp-tRNA(Asn) or Glu-tRNA(Gln) in organisms which lack either or both of asparaginyl-tRNA or glutaminyl-tRNA synthetases. The reaction takes place in the presence of glutamine and ATP through an activated phospho-Asp-tRNA(Asn) or phospho-Glu-tRNA(Gln). In Geobacillus thermodenitrificans (strain NG80-2), this protein is Aspartyl/glutamyl-tRNA(Asn/Gln) amidotransferase subunit B.